A 311-amino-acid chain; its full sequence is Ornithine carbamoyltransferase (311 aa).

Carbamoyl phosphate-binding positions include 57–60, Gln84, Arg108, and 135–138; these read STRT and HPCQ. L-ornithine contacts are provided by residues Asn166, Asp230, and 234-235; that span reads SM. Carbamoyl phosphate contacts are provided by residues 270 to 271 and Arg298; that span reads CL.

The protein belongs to the aspartate/ornithine carbamoyltransferase superfamily. OTCase family.

Its subcellular location is the cytoplasm. The catalysed reaction is carbamoyl phosphate + L-ornithine = L-citrulline + phosphate + H(+). It participates in amino-acid biosynthesis; L-arginine biosynthesis; L-arginine from L-ornithine and carbamoyl phosphate: step 1/3. Reversibly catalyzes the transfer of the carbamoyl group from carbamoyl phosphate (CP) to the N(epsilon) atom of ornithine (ORN) to produce L-citrulline. The sequence is that of Ornithine carbamoyltransferase from Carboxydothermus hydrogenoformans (strain ATCC BAA-161 / DSM 6008 / Z-2901).